Consider the following 435-residue polypeptide: RuBisCO large subunit-binding protein subunit beta-1 (435 aa).

This sequence belongs to the chaperonin (HSP60) family. Oligomer of probably six alpha and six beta subunits.

Its subcellular location is the plastid. The protein localises to the chloroplast. Its function is as follows. This protein binds RuBisCO small and large subunits and is implicated in the assembly of the enzyme oligomer. This chain is RuBisCO large subunit-binding protein subunit beta-1, found in Chlamydomonas reinhardtii (Chlamydomonas smithii).